Consider the following 97-residue polypeptide: MICOS complex subunit MIC12 (97 aa).

Residues 7-24 (LTSITAVSSTLAASYYFY) traverse the membrane as a helical segment.

It belongs to the MICOS complex subunit Mic12 family. Component of the mitochondrial contact site and cristae organizing system (MICOS) complex.

Its subcellular location is the mitochondrion inner membrane. Functionally, component of the MICOS complex, a large protein complex of the mitochondrial inner membrane that plays crucial roles in the maintenance of crista junctions, inner membrane architecture, and formation of contact sites to the outer membrane. The sequence is that of MICOS complex subunit MIC12 (AIM5) from Zygosaccharomyces rouxii (strain ATCC 2623 / CBS 732 / NBRC 1130 / NCYC 568 / NRRL Y-229).